Here is a 692-residue protein sequence, read N- to C-terminus: MQNSEGGADSPATVALRPAAQPVPASPQRVLVQAAGSTPKGTPMQTLTLPRVQPVPPQVQHVYPAQVQYVEGGDAVYANGAIRAAYTYNPDPQLYAPSSAASYFETPGGAQVTVAASSPPAVPSHGMVGITMDVSGTPIVSGAGTYLIHGGMDSTRHSLAHTARSSPATLQWLLDNYETAEGVSLPRSSLYNHYLRHCQEHKLEPVNAASFGKLIRSVFMGLRTRRLGTRGNSKYHYYGIRLKPDSPLNRLQEDTQYMAMRQQPTHQKPRYRPAQKSDSLGDGSAHSNMHSTPEQAMAAQGQHHQQYIDVSHVFPEFPAPDLGSTLLQESVTLHDVKALQLVYRRHCEATLDVVMNLQFQYIEKLWLSFWNCKATSSDGRASLPASDEEPEVTLLPKDKLISLCKCEPILQWMRSCDHILYQALVETLIPDVLRPVPSSLTQAIRNFAKSLEGWLINAMSGFPQQVIQTKVGVVSAFAQTLRRYTSLNHLAQAARAVLQNTSQINQMLSDLNRVDFANVQEQASWVCQCEESLVQRLEHDFKVTLQQQSSLDQWASWLDNVVTQVLKQHAGSPSFPKAARQFLLKWSFYSSMVIRDLTLRSAASFGSFHLIRLLYDEYMFYLVEHRVAQATGETPIAVMGEFNDLASLSLTLLDKEDIGDGHSSEADVDGRSLGEPLVKRERSDPSHPLQGI.

A disordered region spans residues 1-26 (MQNSEGGADSPATVALRPAAQPVPAS). Ser-26 carries the phosphoserine modification. Positions 169–244 (TLQWLLDNYE…YHYYGIRLKP (76 aa)) form a DNA-binding region, RFX-type winged-helix. Residues 261–296 (RQQPTHQKPRYRPAQKSDSLGDGSAHSNMHSTPEQA) are disordered. The span at 285-294 (AHSNMHSTPE) shows a compositional bias: polar residues. Position 386 is a phosphoserine (Ser-386). Positions 660-685 (DGHSSEADVDGRSLGEPLVKRERSDP) are enriched in basic and acidic residues. The segment at 660-692 (DGHSSEADVDGRSLGEPLVKRERSDPSHPLQGI) is disordered.

This sequence belongs to the RFX family. In terms of assembly, homodimer; probably only forms homodimers in testis. Heterodimer; heterodimerizes with RFX1 and RFX3. As to expression, expressed at highest level in testis. Expressed at lower level in thymus. Also expressed in stomach, kidney, liver, brain and heart. Weakly expressed in spleen and lung. Within testis, most abundantly present in spermatocytes: present from pachytene spermatocytes to early spermatids (at protein level). Also present in non-germinal tissues.

It localises to the nucleus. The protein resides in the cytoplasm. Transcription factor that acts as a key regulator of spermatogenesis. Acts by regulating expression of genes required for the haploid phase during spermiogenesis, such as genes required for cilium assembly and function. Recognizes and binds the X-box, a regulatory motif with DNA sequence 5'-GTNRCC(0-3N)RGYAAC-3' present on promoters. Probably activates transcription of the testis-specific histone gene H1-6. In Rattus norvegicus (Rat), this protein is DNA-binding protein RFX2 (Rfx2).